A 529-amino-acid chain; its full sequence is MAEQNLLSEINKRRTFAIISHPDAGKTTITEKVLLFGQAIQKAGTVKGRGSNQHAKSDWMDMEKERGISVTTSVMQFPYKNALVNLLDTPGHEDFSEDTYRTLTAVDSCLMVIDAAKGVEDRTRKLMEVTRLRTTPIVTFMNKCDRDIRDPMELLDEVETELKIACAPITWPIGSGKGFKGVYHIHNDEAVLYKTGQGHKIQDVRTIKGIDNPELVDAIGDDLAAQLRDELELVIGASNEFDLELFLAGELSPVYFGTALGNFGVDHVLDGLTKWAPTPLPRETEDRQVVATEENFTGFVFKIQANMDPKHRDRIAFMRIVSGKYSQGMKMNHVRIGKQVSISDAVTFMAGDRERAGDAFAGDIIGLHNHGTIQIGDTFTQGEKLKFSGIPNFAPELFRRIRLRDPLKQKQLLKGLVQLSEEGAVQVFRPLINNDLIVGAVGVLQFDVVVARLKAEYNVDAIYEGVNVNTARWVSSDDVKKFEDFKRKCESNLALDGGDNLTYIAPSRVNLNLSVERYPEVTFSHTREN.

Positions 11–280 constitute a tr-type G domain; that stretch reads NKRRTFAIIS…GLTKWAPTPL (270 aa). Residues 20–27, 88–92, and 142–145 contribute to the GTP site; these read SHPDAGKT, DTPGH, and NKCD.

It belongs to the TRAFAC class translation factor GTPase superfamily. Classic translation factor GTPase family. PrfC subfamily.

It is found in the cytoplasm. In terms of biological role, increases the formation of ribosomal termination complexes and stimulates activities of RF-1 and RF-2. It binds guanine nucleotides and has strong preference for UGA stop codons. It may interact directly with the ribosome. The stimulation of RF-1 and RF-2 is significantly reduced by GTP and GDP, but not by GMP. The polypeptide is Peptide chain release factor 3 (Pseudoalteromonas translucida (strain TAC 125)).